The primary structure comprises 347 residues: 3-isopropylmalate dehydrogenase (347 aa).

Substrate-binding residues include arginine 95, arginine 105, arginine 129, and aspartate 220. Mg(2+) is bound by residues aspartate 220, aspartate 244, and aspartate 248. 280 to 292 (GSAPDIAGQGKAD) lines the NAD(+) pocket.

This sequence belongs to the isocitrate and isopropylmalate dehydrogenases family. LeuB type 2 subfamily. Homodimer. The cofactor is Mg(2+). Mn(2+) is required as a cofactor.

Its subcellular location is the cytoplasm. The catalysed reaction is (2R,3S)-3-isopropylmalate + NAD(+) = 4-methyl-2-oxopentanoate + CO2 + NADH. It participates in amino-acid biosynthesis; L-leucine biosynthesis; L-leucine from 3-methyl-2-oxobutanoate: step 3/4. Its function is as follows. Catalyzes the oxidation of 3-carboxy-2-hydroxy-4-methylpentanoate (3-isopropylmalate) to 3-carboxy-4-methyl-2-oxopentanoate. The product decarboxylates to 4-methyl-2 oxopentanoate. The protein is 3-isopropylmalate dehydrogenase of Beutenbergia cavernae (strain ATCC BAA-8 / DSM 12333 / CCUG 43141 / JCM 11478 / NBRC 16432 / NCIMB 13614 / HKI 0122).